A 1335-amino-acid chain; its full sequence is Aldehyde oxidase 3 (1335 aa).

Residues 8–95 (DELIFFVNGK…GAAVTTVEGI (88 aa)) form the 2Fe-2S ferredoxin-type domain. The [2Fe-2S] cluster site is built by Cys47, Cys52, Cys55, and Cys77. Gln116 is a binding site for Mo-molybdopterin. [2Fe-2S] cluster contacts are provided by Cys117, Cys120, Cys152, and Cys154. In terms of domain architecture, FAD-binding PCMH-type spans 236-421 (FRGERTTWIA…ISVFVPRSSK (186 aa)). Residue 264-271 (LVIGNTYL) coordinates FAD. Ser320 carries the post-translational modification Phosphoserine. Residues Ser354, His358, Asp367, and Leu411 each coordinate FAD. Mo-molybdopterin is bound by residues Ala802, Leu1043, and Gln1199. Residue Glu1266 is the Proton acceptor; for azaheterocycle hydroxylase activity of the active site.

This sequence belongs to the xanthine dehydrogenase family. In terms of assembly, homodimer. [2Fe-2S] cluster is required as a cofactor. Requires FAD as cofactor. Mo-molybdopterin serves as cofactor. In terms of tissue distribution, highly expressed in liver (at protein level). In liver, the expression is greater in males than females.

It localises to the cytoplasm. The enzyme catalyses an aldehyde + O2 + H2O = a carboxylate + H2O2 + H(+). Its activity is regulated as follows. Inhibited by potassium cyanide, menadione, benzamidine, raloxifene and norharmane. Functionally, oxidase with broad substrate specificity, oxidizing aromatic azaheterocycles, such as N1-methylnicotinamide and phthalazine, as well as aldehydes, such as benzaldehyde, retinal and pyridoxal. Plays a key role in the metabolism of xenobiotics and drugs containing aromatic azaheterocyclic substituents. Is probably involved in the regulation of reactive oxygen species homeostasis. May be a prominent source of superoxide generation via the one-electron reduction of molecular oxygen. May also catalyze nitric oxide (NO) production via the reduction of nitrite to NO with NADH or aldehyde as electron donor. The protein is Aldehyde oxidase 3 (Aox3) of Mus musculus (Mouse).